Reading from the N-terminus, the 204-residue chain is MKGSRSKQPEITPDMLLRAYSIGLFPMADSANDPELFWVEPEIRGVLPLDRFHVSHSLAKRIRKRPYEIRFDTAFEAVIEGCAKPAPGRPTTWINDKIRSLYAALHRMGYAHSVEAWEGDRLVGGLYGVSLGAAFFGESMFSLRTDASKICLVHLVERLRARHFQLLDTQFTTEHLKSFGAVDVPKAEYDLLLARAIASPNLEF.

Belongs to the L/F-transferase family.

It localises to the cytoplasm. The enzyme catalyses N-terminal L-lysyl-[protein] + L-leucyl-tRNA(Leu) = N-terminal L-leucyl-L-lysyl-[protein] + tRNA(Leu) + H(+). It carries out the reaction N-terminal L-arginyl-[protein] + L-leucyl-tRNA(Leu) = N-terminal L-leucyl-L-arginyl-[protein] + tRNA(Leu) + H(+). The catalysed reaction is L-phenylalanyl-tRNA(Phe) + an N-terminal L-alpha-aminoacyl-[protein] = an N-terminal L-phenylalanyl-L-alpha-aminoacyl-[protein] + tRNA(Phe). Functionally, functions in the N-end rule pathway of protein degradation where it conjugates Leu, Phe and, less efficiently, Met from aminoacyl-tRNAs to the N-termini of proteins containing an N-terminal arginine or lysine. The polypeptide is Leucyl/phenylalanyl-tRNA--protein transferase (Sinorhizobium fredii (strain NBRC 101917 / NGR234)).